A 257-amino-acid chain; its full sequence is Thiazole synthase (257 aa).

K98 serves as the catalytic Schiff-base intermediate with DXP. 1-deoxy-D-xylulose 5-phosphate is bound by residues G159, 185-186 (AG), and 207-208 (NT).

It belongs to the ThiG family. Homotetramer. Forms heterodimers with either ThiH or ThiS.

The protein resides in the cytoplasm. It catalyses the reaction [ThiS sulfur-carrier protein]-C-terminal-Gly-aminoethanethioate + 2-iminoacetate + 1-deoxy-D-xylulose 5-phosphate = [ThiS sulfur-carrier protein]-C-terminal Gly-Gly + 2-[(2R,5Z)-2-carboxy-4-methylthiazol-5(2H)-ylidene]ethyl phosphate + 2 H2O + H(+). It participates in cofactor biosynthesis; thiamine diphosphate biosynthesis. Its function is as follows. Catalyzes the rearrangement of 1-deoxy-D-xylulose 5-phosphate (DXP) to produce the thiazole phosphate moiety of thiamine. Sulfur is provided by the thiocarboxylate moiety of the carrier protein ThiS. In vitro, sulfur can be provided by H(2)S. The polypeptide is Thiazole synthase (Anaeromyxobacter dehalogenans (strain 2CP-1 / ATCC BAA-258)).